The sequence spans 330 residues: MKTAYIAKQRQISFVKSHFSRQLEERLGLIEVQAPILSRVGDGTQDNLSGCEKAVQVKVKALPDAQFEVVHSLAKWKRQTLGQHDFSAGEGLYTHMKALRPDEDRLSPLHSVYVDQWDWERVMGDGERQFSTLKSTVEAIWAGIKATEAEVHKQFGLAPFLPEQIQFVHSQELLARFPDLDAKGRERAIAKELGAVFLVGIGGKLSDGHRHDVRAPDYDDWSSASELGYAGLNGDILVWNPVLEDAFELSSMGIRVDADTLMRQLALTGDEDRLQLEWHQALLRGEMPQTIGGGIGQSRLTMLLLQLPHIGQVQCGVWPAQVRESIPAIL.

This sequence belongs to the class-II aminoacyl-tRNA synthetase family. AsnA subfamily. Homodimer.

It is found in the cytoplasm. It carries out the reaction L-aspartate + NH4(+) + ATP = L-asparagine + AMP + diphosphate + H(+). Its pathway is amino-acid biosynthesis; L-asparagine biosynthesis; L-asparagine from L-aspartate (ammonia route): step 1/1. The sequence is that of Aspartate--ammonia ligase from Salmonella typhimurium (strain LT2 / SGSC1412 / ATCC 700720).